A 257-amino-acid chain; its full sequence is Dof zinc finger protein DOF5.3 (257 aa).

The disordered stretch occupies residues 23–50; it reads LSYSSNPTPLDNDQKKPSPATAVTRPQP. Polar residues predominate over residues 24–33; sequence SYSSNPTPLD. Residues 55 to 109 form a Dof-type zinc finger; sequence LRCPRCDSTNTKFCYYNNYSLTQPRYFCKSCRRYWTKGGTLRNIPVGGGCRKNKR. Zn(2+)-binding residues include C57, C60, C82, and C85. The disordered stretch occupies residues 104 to 127; the sequence is CRKNKRSTSSAARSLRTTPEPASH. Over residues 110-121 the composition is skewed to low complexity; it reads STSSAARSLRTT.

In terms of tissue distribution, the PEAR proteins (e.g. DOF2.4, DOF5.1, DOF3.2, DOF1.1, DOF5.6 and DOF5.3) form a short-range concentration gradient that peaks at protophloem sieve elements (PSE). Accumulates in the stele.

It is found in the nucleus. In terms of biological role, transcription factor that binds specifically to a 5'-AA[AG]G-3' consensus core sequence. The PEAR proteins (e.g. DOF2.4, DOF5.1, DOF3.2, DOF1.1, DOF5.6 and DOF5.3) activate gene expression that promotes radial growth of protophloem sieve elements. The protein is Dof zinc finger protein DOF5.3 of Arabidopsis thaliana (Mouse-ear cress).